The chain runs to 233 residues: Probable dihydroorotate dehydrogenase B (NAD(+)), electron transfer subunit (233 aa).

The FAD-binding FR-type domain maps to 1–87 (MYRVVTIEEV…RGPYGHGFIK (87 aa)). Residues cysteine 202, cysteine 207, cysteine 210, and cysteine 218 each coordinate [2Fe-2S] cluster.

It belongs to the PyrK family. In terms of assembly, heterotetramer of 2 PyrK and 2 PyrD type B subunits. Requires [2Fe-2S] cluster as cofactor. FAD is required as a cofactor.

It participates in pyrimidine metabolism; UMP biosynthesis via de novo pathway; orotate from (S)-dihydroorotate (NAD(+) route): step 1/1. Functionally, responsible for channeling the electrons from the oxidation of dihydroorotate from the FMN redox center in the PyrD type B subunit to the ultimate electron acceptor NAD(+). The sequence is that of Probable dihydroorotate dehydrogenase B (NAD(+)), electron transfer subunit from Thermococcus kodakarensis (strain ATCC BAA-918 / JCM 12380 / KOD1) (Pyrococcus kodakaraensis (strain KOD1)).